Consider the following 1332-residue polypeptide: Delta-poly-L-ornithine synthetase (1332 aa).

The L-ornithine site is built by aspartate 217, glutamate 221, and threonine 304. Positions 221, 304, 306, and 308 each coordinate D-ornithine. The L-ornithine site is built by valine 312 and serine 313. Serine 313 is a D-ornithine binding site. The region spanning 524-601 (QPQNPAEEIL…AIAALMLEQP (78 aa)) is the Carrier domain. Serine 560 is modified (O-(pantetheine 4'-phosphoryl)serine). 6 helical membrane-spanning segments follow: residues 629 to 649 (LVTI…PFFT), 664 to 684 (AIAL…VLSI), 868 to 888 (VSAL…FLLV), 908 to 928 (LYYF…TAVI), 1120 to 1140 (IVLP…DVID), and 1151 to 1171 (LVAL…IVAL).

Belongs to the ATP-dependent AMP-binding enzyme family. Pantetheine 4'-phosphate serves as cofactor.

It is found in the cell membrane. The catalysed reaction is n L-ornithine + n ATP + H2O = N(5)-(L-ornithyl)-[N(5)-(L-ornithyl)]n-1 + n AMP + n diphosphate + n H(+). The enzyme catalyses n D-ornithine + n ATP + H2O = N(5)-(D-ornithyl)-[N(5)-(D-ornithyl)]n-1 + n AMP + n diphosphate + n H(+). Functionally, catalyzes the polymerization of L-ornithine, generating poly-L-ornithine composed of 7-12 amino acid units joined via isopeptide bonds between the carboxylate and the side chain amine. This polymer exhibits potent antifungal activity and thus may have a potential role in survival benefit for A.baumannii. The reaction occurs via ATP-dependent adenylation of the substrate. Can also adenylate D-ornithine with similar efficiency and thus may produce D-ornithine polymers. This chain is Delta-poly-L-ornithine synthetase, found in Acinetobacter baumannii (strain AB307-0294).